We begin with the raw amino-acid sequence, 33 residues long: Imperacalcin (33 aa).

Intrachain disulfides connect C3-C17, C10-C21, and C16-C32. Important for stimulation of [3H]ryanodine binding to RYR1 stretches follow at residues 8–9 (KR) and 19–20 (KK). The interval 22-24 (KRR) is essential for stimulation of [3H]ryanodine binding to RYR1. Positions 25 to 27 (GTN) are important for stimulation of [3H]ryanodine binding to RYR1.

Belongs to the scorpion calcin family. Expressed by the venom gland.

The protein localises to the secreted. Functionally, this toxin affects the activity of ryanodine receptors 1, 2 and 3 (RyR1, RyR2 and RyR3). At lower concentrations the toxin increases full openings of the RyRs, and at higher concentrations it inhibits full openings and induces openings to subconductance levels (30% of the full conductance state) and reduces the number of full conductance openings. The different actions may be attributed to the toxins binding at different sites on the RyRs, with binding at a high-affinity site mediating the increase in full openings and the induction of subconductance states evoked upon binding to a lower-affinity site. Furthermore, it triggers calcium release from sarcoplasmic vesicles (11.7 nM are enough to induce a sharp release, and 70% of the total calcium is released after toxin (100 nM) addition) probably by acting as a cell-penetrating peptide (CPP). In addition, it has been shown to dose-dependently stimulate ryanodine binding to RyR1 (EC(50)=8.7 nM). It also augments the bell-shaped calcium-[3H]ryanodine binding curve that is maximal at about 10 uM calcium concentration. It binds a different site as ryanodine. It acts synergistically with caffeine. In vivo, intracerebroventricular injection into mice induces neurotoxic symptoms, followed by death. The sequence is that of Imperacalcin from Pandinus imperator (Emperor scorpion).